The chain runs to 166 residues: UBA-like domain-containing protein 2 (166 aa).

The tract at residues 120–166 is disordered; the sequence is QQPVWLPPASPTTHLHHHHHHPQPVWPPNSQPTGGPQKAMAAMDGQR.

Belongs to the UBALD family.

The protein is UBA-like domain-containing protein 2 (ubald2) of Xenopus tropicalis (Western clawed frog).